Consider the following 20-residue polypeptide: Alpha-1B-glycoprotein (20 aa).

Residues 1 to 20 form a disordered region; the sequence is AVVFDPQPALWAEADTQLEP.

As to quaternary structure, interacts with CRISP3. Post-translationally, glycosylated. As to expression, plasma.

Its subcellular location is the secreted. This chain is Alpha-1B-glycoprotein (A1BG), found in Equus asinus (Donkey).